Reading from the N-terminus, the 156-residue chain is SsrA-binding protein (156 aa).

This sequence belongs to the SmpB family.

The protein localises to the cytoplasm. Required for rescue of stalled ribosomes mediated by trans-translation. Binds to transfer-messenger RNA (tmRNA), required for stable association of tmRNA with ribosomes. tmRNA and SmpB together mimic tRNA shape, replacing the anticodon stem-loop with SmpB. tmRNA is encoded by the ssrA gene; the 2 termini fold to resemble tRNA(Ala) and it encodes a 'tag peptide', a short internal open reading frame. During trans-translation Ala-aminoacylated tmRNA acts like a tRNA, entering the A-site of stalled ribosomes, displacing the stalled mRNA. The ribosome then switches to translate the ORF on the tmRNA; the nascent peptide is terminated with the 'tag peptide' encoded by the tmRNA and targeted for degradation. The ribosome is freed to recommence translation, which seems to be the essential function of trans-translation. The chain is SsrA-binding protein from Staphylococcus epidermidis (strain ATCC 35984 / DSM 28319 / BCRC 17069 / CCUG 31568 / BM 3577 / RP62A).